Reading from the N-terminus, the 163-residue chain is Nucleotide-binding protein Asuc_2113 (163 aa).

It belongs to the YajQ family.

Nucleotide-binding protein. This chain is Nucleotide-binding protein Asuc_2113, found in Actinobacillus succinogenes (strain ATCC 55618 / DSM 22257 / CCUG 43843 / 130Z).